A 158-amino-acid chain; its full sequence is Protein FAM177B (158 aa).

Acidic residues predominate over residues 36–48 (EYSTEEEEEEEKE). The disordered stretch occupies residues 36–59 (EYSTEEEEEEEKEEQSTNSTLDPS).

It belongs to the FAM177 family.

This chain is Protein FAM177B (FAM177B), found in Homo sapiens (Human).